Consider the following 24-residue polypeptide: Tryptophanase operon leader peptide (24 aa).

This chain is Tryptophanase operon leader peptide (tnaL), found in Escherichia coli O157:H7.